Here is a 54-residue protein sequence, read N- to C-terminus: Ribulose bisphosphate carboxylase large chain (54 aa).

A propeptide spanning residues 1–2 (MS) is cleaved from the precursor. Position 3 is an N-acetylproline (proline 3). N6,N6,N6-trimethyllysine is present on lysine 14.

This sequence belongs to the RuBisCO large chain family. Type I subfamily. As to quaternary structure, heterohexadecamer of 8 large chains and 8 small chains.

The protein localises to the plastid. Its subcellular location is the chloroplast. It catalyses the reaction 2 (2R)-3-phosphoglycerate + 2 H(+) = D-ribulose 1,5-bisphosphate + CO2 + H2O. The enzyme catalyses D-ribulose 1,5-bisphosphate + O2 = 2-phosphoglycolate + (2R)-3-phosphoglycerate + 2 H(+). RuBisCO catalyzes two reactions: the carboxylation of D-ribulose 1,5-bisphosphate, the primary event in carbon dioxide fixation, as well as the oxidative fragmentation of the pentose substrate in the photorespiration process. Both reactions occur simultaneously and in competition at the same active site. This is Ribulose bisphosphate carboxylase large chain (rbcL) from Rhamnus cathartica (Common buckthorn).